Here is a 262-residue protein sequence, read N- to C-terminus: Type III pantothenate kinase (262 aa).

9–16 (DAGNSRIK) contributes to the ATP binding site. Substrate is bound by residues Tyr96 and 103–106 (GSDR). Asp105 serves as the catalytic Proton acceptor. Thr129 is an ATP binding site. Position 189 (Thr189) interacts with substrate.

The protein belongs to the type III pantothenate kinase family. As to quaternary structure, homodimer. The cofactor is NH4(+). K(+) serves as cofactor.

The protein localises to the cytoplasm. It catalyses the reaction (R)-pantothenate + ATP = (R)-4'-phosphopantothenate + ADP + H(+). It participates in cofactor biosynthesis; coenzyme A biosynthesis; CoA from (R)-pantothenate: step 1/5. In terms of biological role, catalyzes the phosphorylation of pantothenate (Pan), the first step in CoA biosynthesis. This Burkholderia multivorans (strain ATCC 17616 / 249) protein is Type III pantothenate kinase.